We begin with the raw amino-acid sequence, 138 residues long: ATP synthase epsilon chain (138 aa).

Belongs to the ATPase epsilon chain family. In terms of assembly, F-type ATPases have 2 components, CF(1) - the catalytic core - and CF(0) - the membrane proton channel. CF(1) has five subunits: alpha(3), beta(3), gamma(1), delta(1), epsilon(1). CF(0) has three main subunits: a, b and c.

Its subcellular location is the cell membrane. Produces ATP from ADP in the presence of a proton gradient across the membrane. The sequence is that of ATP synthase epsilon chain from Caldanaerobacter subterraneus subsp. tengcongensis (strain DSM 15242 / JCM 11007 / NBRC 100824 / MB4) (Thermoanaerobacter tengcongensis).